The sequence spans 249 residues: Pyridoxamine 5'-phosphate oxidase family protein ustO (249 aa).

A substrate-binding site is contributed by 21–24 (LFFV). Residues 76-81 (ATVMFC), 91-92 (RL), Arg-105, and 163-164 (RL) contribute to the FMN site. 215–217 (ASY) contributes to the substrate binding site. Residues 227–247 (TGMALMFLVMVVAQWVGYVLY) traverse the membrane as a helical segment.

The protein belongs to the pyridoxamine 5'-phosphate oxidase family. FMN is required as a cofactor.

It localises to the membrane. It participates in mycotoxin biosynthesis. Pyridoxamine 5'-phosphate oxidase family protein; part of the gene cluster that mediates the biosynthesis of the secondary metabolite ustiloxin B, an antimitotic tetrapeptide. First, ustA is processed by the subtilisin-like endoprotease Kex2 that is outside the ustiloxin B gene cluster, at the C-terminal side of Arg-Lys, after transfer to Golgi apparatus through the endoplasmic reticulum (ER). Cleavage by KEX2 generates 16 peptides YAIG-I to YAIG-XVI. To process the precursor peptide further, at least two peptidases are necessary to cleave the N-terminal and C-terminal sides of the Tyr-Ala-Ile-Gly core peptide which serves as backbone for the synthesis of ustiloxin B, through cyclization and modification of the tyrosine with a non-protein coding amino acid, norvaline. One of the two peptidases must be the serine peptidase ustP; and the other pepdidase is probably ustH. Macrocyclization of the core peptide derived from ustA requires the tyrosinase ustQ, as well as the homologous oxidases ustYa and ustYb, and leads to the production of the first cyclization product N-desmethylustiloxin F. For the formation of N-desmethylustiloxin F, three oxidation steps are required, hydroxylation at the benzylic position, hydroxylation at either the aromatic ring of Tyr or beta-position of Ile, and oxidative cyclization. UstQ may catalyze the oxidation of a phenol moiety, whereas the ustYa and ustYb are most likely responsible for the remaining two-step oxidations. N-desmethylustiloxin F is then methylated by ustM to yield ustiloxin F which in turn substrate of the cytochrome P450 monooxygenase ustC which catalyzes the formation of S-deoxyustiloxin H. The flavoprotein monooxygenases ustF1 and ustF2 then participate in the modification of the side chain of S-deoxyustiloxin H, leading to the synthesis of an oxime intermediate, via ustiloxin H. Finally, carboxylative dehydration performed by the cysteine desulfurase-like protein ustD yields ustiloxin B. This is Pyridoxamine 5'-phosphate oxidase family protein ustO from Aspergillus flavus (strain ATCC 200026 / FGSC A1120 / IAM 13836 / NRRL 3357 / JCM 12722 / SRRC 167).